The chain runs to 343 residues: Biotin synthase (343 aa).

The Radical SAM core domain maps to 36-254 (RQVQVSTLLS…IAVARIMMPR (219 aa)). 3 residues coordinate [4Fe-4S] cluster: cysteine 51, cysteine 55, and cysteine 58. Residues cysteine 95, cysteine 126, cysteine 186, and arginine 258 each coordinate [2Fe-2S] cluster.

This sequence belongs to the radical SAM superfamily. Biotin synthase family. Homodimer. The cofactor is [4Fe-4S] cluster. [2Fe-2S] cluster serves as cofactor.

The catalysed reaction is (4R,5S)-dethiobiotin + (sulfur carrier)-SH + 2 reduced [2Fe-2S]-[ferredoxin] + 2 S-adenosyl-L-methionine = (sulfur carrier)-H + biotin + 2 5'-deoxyadenosine + 2 L-methionine + 2 oxidized [2Fe-2S]-[ferredoxin]. Its pathway is cofactor biosynthesis; biotin biosynthesis; biotin from 7,8-diaminononanoate: step 2/2. Catalyzes the conversion of dethiobiotin (DTB) to biotin by the insertion of a sulfur atom into dethiobiotin via a radical-based mechanism. The chain is Biotin synthase from Erwinia tasmaniensis (strain DSM 17950 / CFBP 7177 / CIP 109463 / NCPPB 4357 / Et1/99).